A 196-amino-acid polypeptide reads, in one-letter code: MFLLAGLGNPGEQYALSPHNLGFLVVDRLAEQFGIRVTRKDSKALIGLGEIDGHQVMLAKPQTFMNLSGESLAPLMEKHQIEISNLVVIYDELDLPWGALKIKPKGSAAGHNGMKSVIQWFKTSEIVRVRLGIHPGHPIRSGAEFVLAPIKRSQMKELDEFVGFAADAVRTITAEGVEKAMTKFNRRAPGLNNEEA.

Tyrosine 14 contributes to the tRNA binding site. Histidine 19 (proton acceptor) is an active-site residue. Residues phenylalanine 64, asparagine 66, and asparagine 112 each coordinate tRNA.

It belongs to the PTH family. Monomer.

Its subcellular location is the cytoplasm. It catalyses the reaction an N-acyl-L-alpha-aminoacyl-tRNA + H2O = an N-acyl-L-amino acid + a tRNA + H(+). Its function is as follows. Hydrolyzes ribosome-free peptidyl-tRNAs (with 1 or more amino acids incorporated), which drop off the ribosome during protein synthesis, or as a result of ribosome stalling. Functionally, catalyzes the release of premature peptidyl moieties from peptidyl-tRNA molecules trapped in stalled 50S ribosomal subunits, and thus maintains levels of free tRNAs and 50S ribosomes. The chain is Peptidyl-tRNA hydrolase from Solibacter usitatus (strain Ellin6076).